A 418-amino-acid chain; its full sequence is Gamma-glutamyl phosphate reductase (418 aa).

It belongs to the gamma-glutamyl phosphate reductase family.

It localises to the cytoplasm. The enzyme catalyses L-glutamate 5-semialdehyde + phosphate + NADP(+) = L-glutamyl 5-phosphate + NADPH + H(+). It participates in amino-acid biosynthesis; L-proline biosynthesis; L-glutamate 5-semialdehyde from L-glutamate: step 2/2. In terms of biological role, catalyzes the NADPH-dependent reduction of L-glutamate 5-phosphate into L-glutamate 5-semialdehyde and phosphate. The product spontaneously undergoes cyclization to form 1-pyrroline-5-carboxylate. The chain is Gamma-glutamyl phosphate reductase from Thermobifida fusca (strain YX).